An 829-amino-acid chain; its full sequence is Cap-specific mRNA (nucleoside-2'-O-)-methyltransferase 1 (829 aa).

The tract at residues 1-68 (MKRAAQASDE…DSQNSQGSMA (68 aa)) is disordered. The Bipartite nuclear localization signal motif lies at 2-16 (KRAAQASDEPLKKRK). Positions 31–44 (QRTTSQDSSQSESL) are enriched in low complexity. Over residues 55–68 (SRPSDSQNSQGSMA) the composition is skewed to polar residues. Residues 79–125 (YNNVSQKLMAKMGFREGEGLGKYGQGRKEIVEASTQRGRRGLGLMLK) form the G-patch domain. Residues 195–199 (KTVFD) and arginine 210 each bind substrate. In terms of domain architecture, RrmJ-type SAM-dependent 2'-O-MTase spans 223 to 442 (FFLNRAAMKM…ERYVVCKGLK (220 aa)). Position 226 (asparagine 226) interacts with S-adenosyl-L-methionine. Lysine 231 is an active-site residue. S-adenosyl-L-methionine contacts are provided by residues 269-275 (CAGPGGF) and 327-328 (DI). Aspartate 356 is an active-site residue. A substrate-binding site is contributed by 366-368 (NLQ). Residue lysine 396 is the Proton acceptor of the active site. Substrate is bound at residue asparagine 431. Residues 745–779 (KTVNDPWTMAFSKSSKRKFFYNKQTKESTYDLPAT) enclose the WW domain.

It localises to the nucleus. It catalyses the reaction a 5'-end (N(7)-methyl 5'-triphosphoguanosine)-ribonucleoside in mRNA + S-adenosyl-L-methionine = a 5'-end (N(7)-methyl 5'-triphosphoguanosine)-(2'-O-methyl-ribonucleoside) in mRNA + S-adenosyl-L-homocysteine + H(+). Functionally, S-adenosyl-L-methionine-dependent methyltransferase that mediates mRNA cap1 2'-O-ribose methylation to the 5'-cap structure of mRNAs. Methylates the ribose of the first nucleotide of a m(7)GpppG-capped mRNA and small nuclear RNA (snRNA) to produce m(7)GpppRm (cap1). Displays a preference for cap0 transcripts. Cap1 modification is linked to higher levels of translation. May be involved in the interferon response pathway. The chain is Cap-specific mRNA (nucleoside-2'-O-)-methyltransferase 1 (cmtr1) from Danio rerio (Zebrafish).